Consider the following 481-residue polypeptide: Probable glycine dehydrogenase (decarboxylating) subunit 2 (481 aa).

Lys265 is modified (N6-(pyridoxal phosphate)lysine).

This sequence belongs to the GcvP family. C-terminal subunit subfamily. The glycine cleavage system is composed of four proteins: P, T, L and H. In this organism, the P 'protein' is a heterodimer of two subunits. The cofactor is pyridoxal 5'-phosphate.

The catalysed reaction is N(6)-[(R)-lipoyl]-L-lysyl-[glycine-cleavage complex H protein] + glycine + H(+) = N(6)-[(R)-S(8)-aminomethyldihydrolipoyl]-L-lysyl-[glycine-cleavage complex H protein] + CO2. Functionally, the glycine cleavage system catalyzes the degradation of glycine. The P protein binds the alpha-amino group of glycine through its pyridoxal phosphate cofactor; CO(2) is released and the remaining methylamine moiety is then transferred to the lipoamide cofactor of the H protein. The chain is Probable glycine dehydrogenase (decarboxylating) subunit 2 from Thermosipho melanesiensis (strain DSM 12029 / CIP 104789 / BI429).